A 663-amino-acid polypeptide reads, in one-letter code: UvrABC system protein B (663 aa).

Residues 1-10 (MIDKRDDKPF) are compositionally biased toward basic and acidic residues. Positions 1–23 (MIDKRDDKPFKLKSKYKPSGDQP) are disordered. One can recognise a Helicase ATP-binding domain in the interval 31–418 (DNIEGGEKAQ…TNTIIEQIIR (388 aa)). 44 to 51 (GATGTGKT) provides a ligand contact to ATP. Residues 97-120 (YYDYYQPEAYVPSSDTYIEKDSSV) carry the Beta-hairpin motif. In terms of domain architecture, Helicase C-terminal spans 435-601 (QMDDLLGEIN…TIKKDIRGLI (167 aa)). The 36-residue stretch at 627–662 (KEAINALQKQMQEAAELLDFELAAQMRDLILELKLM) folds into the UVR domain.

Belongs to the UvrB family. Forms a heterotetramer with UvrA during the search for lesions. Interacts with UvrC in an incision complex.

It localises to the cytoplasm. Its function is as follows. The UvrABC repair system catalyzes the recognition and processing of DNA lesions. A damage recognition complex composed of 2 UvrA and 2 UvrB subunits scans DNA for abnormalities. Upon binding of the UvrA(2)B(2) complex to a putative damaged site, the DNA wraps around one UvrB monomer. DNA wrap is dependent on ATP binding by UvrB and probably causes local melting of the DNA helix, facilitating insertion of UvrB beta-hairpin between the DNA strands. Then UvrB probes one DNA strand for the presence of a lesion. If a lesion is found the UvrA subunits dissociate and the UvrB-DNA preincision complex is formed. This complex is subsequently bound by UvrC and the second UvrB is released. If no lesion is found, the DNA wraps around the other UvrB subunit that will check the other stand for damage. The sequence is that of UvrABC system protein B from Streptococcus pyogenes serotype M1.